A 434-amino-acid chain; its full sequence is ATP-dependent protease ATPase subunit HslU (434 aa).

ATP contacts are provided by residues Val18, 60–65, Asp247, Glu312, and Arg384; that span reads GVGKTE.

Belongs to the ClpX chaperone family. HslU subfamily. As to quaternary structure, a double ring-shaped homohexamer of HslV is capped on each side by a ring-shaped HslU homohexamer. The assembly of the HslU/HslV complex is dependent on binding of ATP.

The protein localises to the cytoplasm. ATPase subunit of a proteasome-like degradation complex; this subunit has chaperone activity. The binding of ATP and its subsequent hydrolysis by HslU are essential for unfolding of protein substrates subsequently hydrolyzed by HslV. HslU recognizes the N-terminal part of its protein substrates and unfolds these before they are guided to HslV for hydrolysis. The chain is ATP-dependent protease ATPase subunit HslU from Bradyrhizobium sp. (strain ORS 278).